Here is a 272-residue protein sequence, read N- to C-terminus: Neurogenin-2 (272 aa).

The disordered stretch occupies residues 30–69 (LTPLSSSADEEEEEEPGASGGARRQRGAEAGQGARGGVAA). The bHLH domain occupies 112–164 (TRRLKANNRERNRMHNLNAALDALREVLPTFPEDAKLTKIETLRFAHNYIWAL). The segment covering 197-239 (ASAALSSSGDSPSPASTWSCTNSPAPSSSVSSNSTSPYSCTLS) has biased composition (low complexity). The segment at 197-264 (ASAALSSSGD…PPDKHRYAPH (68 aa)) is disordered.

In terms of assembly, efficient DNA binding requires dimerization with another bHLH protein.

The protein localises to the nucleus. Transcriptional regulator. Involved in neuronal differentiation. Activates transcription by binding to the E box (5'-CANNTG-3'). The chain is Neurogenin-2 (NEUROG2) from Homo sapiens (Human).